The chain runs to 644 residues: MFQDNPLLAQLKQQLHSQTPRVEGVVKGTEKGFGFLEVDAQKSYFISPPFMKKVMHGDKISAVVRTEKEREIAEPEELIEPFLTRFIGRVQVKDERLAVVPDHPLIKEVIPTRPQHGVDQMFQTGDWAVAEMRRHPLKGDRQFYAEITALVTRADDHFAPWWVTLARHNLERAAPTMPEGVSLQEDGPAREDLTALDFITIDSASTEDMDDAIHLAPAPNGAWVMTVAIADPTAWVPAGSPLDNIARERAFTNYLPGFNIPMLPRALSDDLCSLRAHERRPALACRVTVRPNGTLADDARFFTAWIESKGKLAYDNVSDWLENLGSWQPETEAIADQIRLLHDVCLARSAWRQRHALVFKDRPDYRFVLNEKGNVDDIVVEPRRIANRMIEEAMITANVCAARVLRDGLGYGLYNVHHGFDPLLVDQAVAILHSHQIEVDPADLLTLEGFCALRRRLDAQPTSYLDSRIRRFQTFAEVSTVPGPHFGLGLDAYATWTSPIRKYGDMINHRLLKALIGVGDAERPNEEVTLRLAERRRQNRMAERDVGDWLYARFLQPKAGSDSRFAAEIIDISRGGMRVRLLNNGAVAFIPAPFIHSVRDELVCSQDTGTVQVKGEERYRQGDTLDVTLAEVRMENRSVIARPV.

The RNB domain occupies Arg190–Ile516. Positions Asp562–Val644 constitute an S1 motif domain.

Belongs to the RNR ribonuclease family. RNase II subfamily.

It is found in the cytoplasm. It carries out the reaction Exonucleolytic cleavage in the 3'- to 5'-direction to yield nucleoside 5'-phosphates.. In terms of biological role, involved in mRNA degradation. Hydrolyzes single-stranded polyribonucleotides processively in the 3' to 5' direction. This is Exoribonuclease 2 from Sodalis glossinidius (strain morsitans).